The primary structure comprises 624 residues: Chaperone protein HtpG (624 aa).

An a; substrate-binding region spans residues 1-336 (MKGQETRGFQ…SNDLPLNVSR (336 aa)). The tract at residues 337–552 (EILQDSTVTR…ADEMSTQMAK (216 aa)) is b. Residues 553 to 624 (LFAAAGQSVP…IRRMNQLLVS (72 aa)) form a c region.

The protein belongs to the heat shock protein 90 family. As to quaternary structure, homodimer.

The protein resides in the cytoplasm. In terms of biological role, molecular chaperone. Has ATPase activity. The protein is Chaperone protein HtpG of Salmonella choleraesuis (strain SC-B67).